We begin with the raw amino-acid sequence, 66 residues long: Large ribosomal subunit protein uL29 (66 aa).

The protein belongs to the universal ribosomal protein uL29 family.

In Ruegeria sp. (strain TM1040) (Silicibacter sp.), this protein is Large ribosomal subunit protein uL29.